The primary structure comprises 179 residues: Signal peptidase complex subunit 2 (179 aa).

Topologically, residues methionine 1 to serine 48 are cytoplasmic. The chain crosses the membrane as a helical span at residues asparagine 49 to valine 69. Residues glutamine 70–asparagine 74 lie on the Extracellular side of the membrane. Residues proline 75–phenylalanine 95 traverse the membrane as a helical segment. At glutamate 96–asparagine 179 the chain is on the cytoplasmic side.

The protein belongs to the SPCS2 family. As to quaternary structure, component of the signal peptidase complex (SPC) composed of a catalytic subunit SEC11/SPC21 and three accessory subunits SPC25, SPC3/SPC22, SPC1/SPC12. The complex induces a local thinning of the ER membrane which is used to measure the length of the signal peptide (SP) h-region of protein substrates. This ensures the selectivity of the complex towards h-regions shorter than 18-20 amino acids. Within the complex, interacts with SEC11/SPC21. Component of a complex composed of SPC25 and PMV; the interaction is mediated via the transmembrane domains. The complex interacts with the SEC61 channel-forming translocon complex and is involved in the recognition and import of PEXEL motif-containing proteins into the ER for subsequent export.

The protein resides in the endoplasmic reticulum membrane. Its function is as follows. Component of the signal peptidase complex (SPC) which catalyzes the cleavage of N-terminal signal sequences from nascent proteins as they are translocated into the lumen of the endoplasmic reticulum. Enhances the enzymatic activity of SPC and facilitates the interactions between different components of the translocation site. Also, regulatory component of the CSP25-plasmepsin PMV complex which cleaves the pentameric localization motif RxLxE/Q/D (termed Plasmodium export element (PEXEL)) located downstream of the N-terminal secretory signal sequence of several proteins. The sequence is that of Signal peptidase complex subunit 2 from Plasmodium falciparum (isolate 3D7).